The following is a 343-amino-acid chain: Protein RecA (343 aa).

The protein belongs to the RecA family.

The protein localises to the cytoplasm. Can catalyze the hydrolysis of ATP in the presence of single-stranded DNA, the ATP-dependent uptake of single-stranded DNA by duplex DNA, and the ATP-dependent hybridization of homologous single-stranded DNAs. It interacts with LexA causing its activation and leading to its autocatalytic cleavage. The protein is Protein RecA of Coxiella burnetii (strain RSA 493 / Nine Mile phase I).